Here is a 519-residue protein sequence, read N- to C-terminus: uncharacterized protein (519 aa).

Transmembrane regions (helical) follow at residues 37–57, 82–102, 114–134, 146–166, 175–195, 209–229, 240–260, 269–289, 309–329, 337–357, 373–393, 402–422, 434–454, and 475–495; these read ISMS…AQLM, GQLS…ILIA, MFVL…FSYY, ALTG…LGRV, LIFA…SVFS, WTTA…IPHI, FDYL…FSWN, VPYV…FVLV, CVLI…YYLW, FATP…GCAA, IMVV…TAPI, FVSI…ATLM, IAAS…LGIA, and AWYM…LTVF.

Belongs to the major facilitator superfamily.

It is found in the endoplasmic reticulum. The protein localises to the membrane. This is an uncharacterized protein from Schizosaccharomyces pombe (strain 972 / ATCC 24843) (Fission yeast).